The sequence spans 257 residues: Imidazole glycerol phosphate synthase subunit HisF (257 aa).

Catalysis depends on residues aspartate 12 and aspartate 131.

This sequence belongs to the HisA/HisF family. In terms of assembly, heterodimer of HisH and HisF.

It localises to the cytoplasm. The enzyme catalyses 5-[(5-phospho-1-deoxy-D-ribulos-1-ylimino)methylamino]-1-(5-phospho-beta-D-ribosyl)imidazole-4-carboxamide + L-glutamine = D-erythro-1-(imidazol-4-yl)glycerol 3-phosphate + 5-amino-1-(5-phospho-beta-D-ribosyl)imidazole-4-carboxamide + L-glutamate + H(+). Its pathway is amino-acid biosynthesis; L-histidine biosynthesis; L-histidine from 5-phospho-alpha-D-ribose 1-diphosphate: step 5/9. Functionally, IGPS catalyzes the conversion of PRFAR and glutamine to IGP, AICAR and glutamate. The HisF subunit catalyzes the cyclization activity that produces IGP and AICAR from PRFAR using the ammonia provided by the HisH subunit. This is Imidazole glycerol phosphate synthase subunit HisF from Mycobacteroides abscessus (strain ATCC 19977 / DSM 44196 / CCUG 20993 / CIP 104536 / JCM 13569 / NCTC 13031 / TMC 1543 / L948) (Mycobacterium abscessus).